The following is a 203-amino-acid chain: Protein S40-6 (203 aa).

Residues 1-33 (MAKGRKPTTMNRSDRYLGSYTYGDSHGNSVTDE) are disordered.

It belongs to the senescence regulator S40 family.

It is found in the cytoplasm. This chain is Protein S40-6, found in Arabidopsis thaliana (Mouse-ear cress).